Here is a 321-residue protein sequence, read N- to C-terminus: Small ribosomal subunit biogenesis GTPase RsgA (321 aa).

The region spanning 89-248 (QSWINRPPVA…VADTPGFNRP (160 aa)) is the CP-type G domain. Residues 138–141 (TKRD) and 190–198 (GPSGVGKTS) each bind GTP. Cys-273, Cys-278, His-280, and Cys-286 together coordinate Zn(2+).

It belongs to the TRAFAC class YlqF/YawG GTPase family. RsgA subfamily. In terms of assembly, monomer. Associates with 30S ribosomal subunit, binds 16S rRNA. Zn(2+) is required as a cofactor.

The protein resides in the cytoplasm. Its function is as follows. One of several proteins that assist in the late maturation steps of the functional core of the 30S ribosomal subunit. Helps release RbfA from mature subunits. May play a role in the assembly of ribosomal proteins into the subunit. Circularly permuted GTPase that catalyzes slow GTP hydrolysis, GTPase activity is stimulated by the 30S ribosomal subunit. The polypeptide is Small ribosomal subunit biogenesis GTPase RsgA (Prochlorococcus marinus (strain MIT 9313)).